The primary structure comprises 390 residues: Nucleotide-sugar uncharacterized transporter 1 (390 aa).

Transmembrane regions (helical) follow at residues 61 to 81 (ICGP…IIFM), 89 to 109 (IGFE…YLLM), 128 to 148 (SLLP…LANV), 155 to 175 (VGFY…AEFL), 182 to 201 (SFMK…VATV), 206 to 228 (FSLF…KILW), 249 to 269 (ITLL…ALSF), 278 to 298 (AILV…LALG), 306 to 326 (VVLG…IFGS), and 329 to 349 (GFIS…YTYL). A compositionally biased stretch (low complexity) spans 356-365 (LKTSSSSSAL). Residues 356–390 (LKTSSSSSALSEKKSRFSDLKDDDKNLEPYGSEAV) are disordered. The span at 366–382 (SEKKSRFSDLKDDDKNL) shows a compositional bias: basic and acidic residues.

The protein belongs to the TPT transporter family. TPT (TC 2.A.7.9) subfamily.

Its subcellular location is the membrane. The polypeptide is Nucleotide-sugar uncharacterized transporter 1 (Arabidopsis thaliana (Mouse-ear cress)).